A 352-amino-acid chain; its full sequence is uncharacterized protein (352 aa).

This is an uncharacterized protein from Frog virus 3 (isolate Goorha) (FV-3).